Reading from the N-terminus, the 431-residue chain is Chorismate synthase 2, chloroplastic (431 aa).

The N-terminal 48 residues, 1 to 48, are a transit peptide targeting the chloroplast; the sequence is MASSMLTKQFLGAPFSSFGSGQQPSKLCSSNLRFPTHRSQPKRLEIQA. A disordered region spans residues 93 to 141; sequence DRRRPGQSRITTPRKETDTCKISSGTADGLTTGSPIKVEVPNTDQRGND. A compositionally biased stretch (polar residues) spans 112 to 126; the sequence is CKISSGTADGLTTGS.

It belongs to the chorismate synthase family. As to quaternary structure, homotetramer. The cofactor is FMNH2. Predominantly expressed in flowers and roots and, to a lesser extent, in stems, leaves, and cotyledons.

The protein localises to the plastid. It localises to the chloroplast. The enzyme catalyses 5-O-(1-carboxyvinyl)-3-phosphoshikimate = chorismate + phosphate. It participates in metabolic intermediate biosynthesis; chorismate biosynthesis; chorismate from D-erythrose 4-phosphate and phosphoenolpyruvate: step 7/7. Functionally, catalyzes the last common step of the biosynthesis of aromatic amino acids, produced via the shikimic acid pathway. The chain is Chorismate synthase 2, chloroplastic (CS2) from Solanum lycopersicum (Tomato).